We begin with the raw amino-acid sequence, 515 residues long: Zinc metalloproteinase-disintegrin BA-5A (515 aa).

The N-terminal stretch at 1 to 20 is a signal peptide; it reads MMQVLLVTICLAVFPYQGSS. The propeptide occupies 21–193; that stretch reads IILESGNVND…KEASQLVATS (173 aa). The Peptidase M12B domain maps to 203-399; it reads RYIKYFIVVD…YKPDCTLIRP (197 aa). The N-linked (GlcNAc...) asparagine glycan is linked to Asn-263. 11 disulfide bridges follow: Cys-314/Cys-394, Cys-354/Cys-378, Cys-356/Cys-361, Cys-410/Cys-429, Cys-421/Cys-439, Cys-423/Cys-434, Cys-433/Cys-456, Cys-447/Cys-453, Cys-452/Cys-478, Cys-465/Cys-485, and Cys-472/Cys-497. His-339 is a Zn(2+) binding site. Residue Glu-340 is part of the active site. His-343 and His-349 together coordinate Zn(2+). Residue Asn-377 is glycosylated (N-linked (GlcNAc...) asparagine). The Disintegrin domain maps to 407–493; it reads PPVCGNDILE…DCPIDHFHRN (87 aa). The D/ECD-tripeptide motif lies at 471–473; that stretch reads ECD.

This sequence belongs to the venom metalloproteinase (M12B) family. P-II subfamily. As to quaternary structure, monomer. It depends on Zn(2+) as a cofactor. As to expression, expressed by the venom gland.

It is found in the secreted. In terms of biological role, snake venom zinc metalloprotease that possesses hemorrhagic activity and degrades alpha chain of fibrinogen (FGA). May inhibit alpha-2/beta-1 integrin (ITGA2/ITGB1). The chain is Zinc metalloproteinase-disintegrin BA-5A from Bitis arietans (African puff adder).